Reading from the N-terminus, the 108-residue chain is UPF0145 protein LCA_1282 (108 aa).

The protein belongs to the UPF0145 family.

The protein is UPF0145 protein LCA_1282 of Latilactobacillus sakei subsp. sakei (strain 23K) (Lactobacillus sakei subsp. sakei).